The sequence spans 157 residues: 2-C-methyl-D-erythritol 2,4-cyclodiphosphate synthase (157 aa).

A divalent metal cation contacts are provided by Asp8 and His10. Residues Asp8–His10 and His34–Ser35 each bind 4-CDP-2-C-methyl-D-erythritol 2-phosphate. His42 is an a divalent metal cation binding site. Residues Asp56–Gly58 and Thr132–Glu135 each bind 4-CDP-2-C-methyl-D-erythritol 2-phosphate.

It belongs to the IspF family. In terms of assembly, homotrimer. A divalent metal cation is required as a cofactor.

It catalyses the reaction 4-CDP-2-C-methyl-D-erythritol 2-phosphate = 2-C-methyl-D-erythritol 2,4-cyclic diphosphate + CMP. The protein operates within isoprenoid biosynthesis; isopentenyl diphosphate biosynthesis via DXP pathway; isopentenyl diphosphate from 1-deoxy-D-xylulose 5-phosphate: step 4/6. In terms of biological role, involved in the biosynthesis of isopentenyl diphosphate (IPP) and dimethylallyl diphosphate (DMAPP), two major building blocks of isoprenoid compounds. Catalyzes the conversion of 4-diphosphocytidyl-2-C-methyl-D-erythritol 2-phosphate (CDP-ME2P) to 2-C-methyl-D-erythritol 2,4-cyclodiphosphate (ME-CPP) with a corresponding release of cytidine 5-monophosphate (CMP). The sequence is that of 2-C-methyl-D-erythritol 2,4-cyclodiphosphate synthase from Synechococcus sp. (strain JA-3-3Ab) (Cyanobacteria bacterium Yellowstone A-Prime).